A 1299-amino-acid polypeptide reads, in one-letter code: DExH-box ATP-dependent RNA helicase DExH6 (1299 aa).

The region spanning 15–82 is the R3H domain; sequence PTSVEATRIW…QRRLSIFKSR (68 aa). A Helicase ATP-binding domain is found at 197 to 366; that stretch reads TSAVESNQVI…FGGCPVVRVP (170 aa). 210–217 is a binding site for ATP; the sequence is GETGCGKT. The DEIH box motif lies at 313-316; the sequence is DEIH. The Helicase C-terminal domain occupies 537-711; that stretch reads LIQQLMRKIC…ELCLQVKILD (175 aa). 2 disordered regions span residues 987–1039 and 1175–1299; these read PTGS…MMSS and IPRQ…AEQK. Residues 992–1006 show a composition bias toward acidic residues; it reads DSDDSNEEEEDDEEV. Over residues 1007-1020 the composition is skewed to low complexity; it reads AANTNEEVAANTNE. A compositionally biased stretch (basic and acidic residues) spans 1023-1032; sequence MDIHKEESRR. Composition is skewed to polar residues over residues 1176 to 1193, 1204 to 1214, and 1239 to 1251; these read PRQQNYKQRNPKATNNTD, NPTNRINQPEA, and PSDQAYGNKQHNT. Positions 1182-1200 match the Bipartite nuclear localization signal motif; that stretch reads KQRNPKATNNTDSGKKKEK. Positions 1267 to 1283 match the Bipartite nuclear localization signal motif; it reads KKTKTRSGNNSDSGKKK. The span at 1279–1299 shows a compositional bias: basic and acidic residues; that stretch reads SGKKKEQYIPKRQREDKAEQK.

Belongs to the DExH box helicase family. Specifically expressed in the tapetum and vascular tissues.

The protein resides in the nucleus. It catalyses the reaction ATP + H2O = ADP + phosphate + H(+). Functionally, may function as an ATP-dependent RNA/DNA helicase. This is DExH-box ATP-dependent RNA helicase DExH6 from Arabidopsis thaliana (Mouse-ear cress).